A 287-amino-acid chain; its full sequence is Energy-coupling factor transporter ATP-binding protein EcfA2 (287 aa).

One can recognise an ABC transporter domain in the interval 3-246; that stretch reads VKFSQVSYVY…TNYVNQLHLD (244 aa). 40 to 47 contributes to the ATP binding site; sequence GQTGSGKS.

This sequence belongs to the ABC transporter superfamily. Energy-coupling factor EcfA family. Forms a stable energy-coupling factor (ECF) transporter complex composed of 2 membrane-embedded substrate-binding proteins (S component), 2 ATP-binding proteins (A component) and 2 transmembrane proteins (T component).

It localises to the cell membrane. ATP-binding (A) component of a common energy-coupling factor (ECF) ABC-transporter complex. Unlike classic ABC transporters this ECF transporter provides the energy necessary to transport a number of different substrates. In Staphylococcus saprophyticus subsp. saprophyticus (strain ATCC 15305 / DSM 20229 / NCIMB 8711 / NCTC 7292 / S-41), this protein is Energy-coupling factor transporter ATP-binding protein EcfA2.